Consider the following 214-residue polypeptide: MAPTGKRTGESTRSTGPAPPSSAGYLDGRLLIAMPVMGDARFERSVIYLCAHSAEGAMGIIVNHPAGSIDFPELLEQLGIIRKGEHIKLPENAESMKVLRGGPVDTGRGFVLHSSDFYIENATLRIDDGVCLTATVDILRAIANGSGPKHAILALGYAGWAPGQLETEIQSNGWLHCDADADLIFGDDVDEKYGRALRKIGIDPGMLSNEAGHA.

The tract at residues 1–22 (MAPTGKRTGESTRSTGPAPPSS) is disordered.

Belongs to the UPF0301 (AlgH) family.

The sequence is that of UPF0301 protein blr1492 from Bradyrhizobium diazoefficiens (strain JCM 10833 / BCRC 13528 / IAM 13628 / NBRC 14792 / USDA 110).